A 520-amino-acid chain; its full sequence is Ribonuclease Y 2 (520 aa).

The chain crosses the membrane as a helical span at residues 7–23 (VVLLLASIGVGYGLRAK). The 64-residue stretch at 206 to 269 (NHRSFIAENA…AVAMETMEMI (64 aa)) folds into the KH domain. Residues 332-425 (ILEHSIETAK…VEAADAISGA (94 aa)) enclose the HD domain.

The protein belongs to the RNase Y family.

The protein localises to the cell membrane. Endoribonuclease that initiates mRNA decay. The sequence is that of Ribonuclease Y 2 from Pediococcus pentosaceus (strain ATCC 25745 / CCUG 21536 / LMG 10740 / 183-1w).